Reading from the N-terminus, the 504-residue chain is Signal recognition particle subunit SRP54 (504 aa).

An NG domain region spans residues 1–295 (MVLADLGRKI…KTQPFISKLL (295 aa)). GTP is bound by residues 108 to 115 (GLQGSGKT), 190 to 194 (DTSGR), and 248 to 251 (TKLD). The segment at 296–504 (GMGDIEGLID…MKGMMGFNNM (209 aa)) is M-domain.

The protein belongs to the GTP-binding SRP family. SRP54 subfamily. Component of a signal recognition particle (SRP) complex that consists of a 7SL RNA molecule of 300 nucleotides and six protein subunits: SRP72, SRP68, SRP54, SRP19, SRP14 and SRP9. Interacts with RNPS1. Interacts with the SRP receptor subunit SRPRA.

The protein localises to the nucleus speckle. It localises to the cytoplasm. The protein resides in the endoplasmic reticulum. It catalyses the reaction GTP + H2O = GDP + phosphate + H(+). In terms of biological role, component of the signal recognition particle (SRP) complex, a ribonucleoprotein complex that mediates the cotranslational targeting of secretory and membrane proteins to the endoplasmic reticulum (ER). As part of the SRP complex, associates with the SRP receptor (SR) component SRPRA to target secretory proteins to the endoplasmic reticulum membrane. Binds to the signal sequence of presecretory proteins when they emerge from the ribosomes. Displays basal GTPase activity, and stimulates reciprocal GTPase activation of the SR subunit SRPRA. Forms a guanosine 5'-triphosphate (GTP)-dependent complex with the SR subunit SRPRA. SR compaction and GTPase mediated rearrangement of SR drive SRP-mediated cotranslational protein translocation into the ER. Requires the presence of SRP9/SRP14 and/or SRP19 to stably interact with RNA. Plays a role in proliferation and differentiation of granulocytic cells, neutrophils migration capacity and exocrine pancreas development. This is Signal recognition particle subunit SRP54 from Homo sapiens (Human).